Here is a 745-residue protein sequence, read N- to C-terminus: Immunoglobulin superfamily containing leucine-rich repeat protein 2 (745 aa).

An N-terminal signal peptide occupies residues 1-18 (MFPLRALWLVWALLGVAG). The LRRNT domain maps to 19-51 (SCPEPCACVDKYAHQFADCAYKELREVPEGLPA). Residues 19–589 (SCPEPCACVD…VFSTKKELPS (571 aa)) lie on the Extracellular side of the membrane. N-linked (GlcNAc...) asparagine glycosylation is present at N52. 5 LRR repeats span residues 52–73 (NVTTLSLSANKITVLRRGAFAD), 76–97 (QVTSLWLAHNEVRTVEPGALAV), 100–123 (QLKNLDLSHNFISSFPWSDLRNLS), 124–145 (ALQLLKMNHNRLGSLPRDALGA), and 148–169 (DLRSLRINNNRLRTLAPGTFDA). Residue N121 is glycosylated (N-linked (GlcNAc...) asparagine). Residues 181-232 (NPFHCGCGLVWLQAWAASTRVSLPEPDSIACASPPALQGVPVYRLPALPCAP) form the LRRCT domain. The region spanning 233-371 (PSVHLSAEPP…GANSTSIRVA (139 aa)) is the Ig-like domain. The cysteines at positions 260 and 355 are disulfide-linked. Residues 287 to 326 (VLSGEDDGVGAEEGEGEGDGDLLTQTQAQTPTPAPAWPAP) are disordered. The segment covering 290 to 306 (GEDDGVGAEEGEGEGDG) has biased composition (acidic residues). 2 N-linked (GlcNAc...) asparagine glycosylation sites follow: N337 and N364. Residues 375–466 (TGPPKHAPGA…QRCGNGDPSR (92 aa)) form a disordered region. The span at 431 to 449 (TETEPEEDTSEGEEAEDQI) shows a compositional bias: acidic residues. Residues N474 and N563 are each glycosylated (N-linked (GlcNAc...) asparagine). A helical membrane pass occupies residues 590–610 (LLVIVAVSVFLLVLATVPLLG). Topologically, residues 611 to 745 (AACCHLLAKH…INGNYRQTAG (135 aa)) are cytoplasmic. The segment at 656–722 (KSYPAGGEAG…FEAGSEYSDR (67 aa)) is disordered. Residues 665-683 (GGEEPEDVQGEGLDEDAEQ) show a composition bias toward acidic residues. Y719 bears the Phosphotyrosine mark. Phosphoserine is present on S720.

In terms of assembly, homomultimer. Interacts with NTRK1/TrkA.

It localises to the cell membrane. In terms of biological role, required for axon extension during neural development. In Homo sapiens (Human), this protein is Immunoglobulin superfamily containing leucine-rich repeat protein 2 (ISLR2).